Consider the following 462-residue polypeptide: Tissue alpha-L-fucosidase (462 aa).

A signal peptide spans 1–28 (MWDLKSEWWAVGFGLLLLLAASAQAGGL). N-linked (GlcNAc...) asparagine glycans are attached at residues asparagine 237, asparagine 264, and asparagine 378.

This sequence belongs to the glycosyl hydrolase 29 family. As to quaternary structure, homotetramer.

The protein localises to the lysosome. The catalysed reaction is an alpha-L-fucoside + H2O = L-fucose + an alcohol. It carries out the reaction a neolactoside IV(2)-alpha-Fuc-nLc4Cer(d18:1(4E)) + H2O = a neolactoside nLc4Cer(d18:1(4E)) + L-fucose. It catalyses the reaction a neolactoside IV(2)-alpha-Fuc-nLc4Cer(d18:0) + H2O = a neolactoside nLc4Cer(d18:0) + L-fucose. In terms of biological role, alpha-L-fucosidase is responsible for hydrolyzing the alpha-1,6-linked fucose joined to the reducing-end N-acetylglucosamine of the carbohydrate moieties of glycoproteins. In Rattus norvegicus (Rat), this protein is Tissue alpha-L-fucosidase (Fuca1).